Reading from the N-terminus, the 699-residue chain is Elongation factor G 1 (699 aa).

Residues 8 to 290 enclose the tr-type G domain; sequence EHYRNIGICA…AVIEFLPSPS (283 aa). Residues 17–24, 88–92, and 142–145 each bind GTP; these read AHVDAGKT, DTPGH, and NKMD.

The protein belongs to the TRAFAC class translation factor GTPase superfamily. Classic translation factor GTPase family. EF-G/EF-2 subfamily.

Its subcellular location is the cytoplasm. In terms of biological role, catalyzes the GTP-dependent ribosomal translocation step during translation elongation. During this step, the ribosome changes from the pre-translocational (PRE) to the post-translocational (POST) state as the newly formed A-site-bound peptidyl-tRNA and P-site-bound deacylated tRNA move to the P and E sites, respectively. Catalyzes the coordinated movement of the two tRNA molecules, the mRNA and conformational changes in the ribosome. The polypeptide is Elongation factor G 1 (Vibrio parahaemolyticus serotype O3:K6 (strain RIMD 2210633)).